Consider the following 191-residue polypeptide: Thymidylate kinase (191 aa).

An ATP-binding site is contributed by 7–14; the sequence is GVDGAGKS.

This sequence belongs to the thymidylate kinase family.

It catalyses the reaction dTMP + ATP = dTDP + ADP. Phosphorylation of dTMP to form dTDP in both de novo and salvage pathways of dTTP synthesis. This is Thymidylate kinase (tmk) from Helicobacter pylori (strain ATCC 700392 / 26695) (Campylobacter pylori).